A 114-amino-acid chain; its full sequence is Large ribosomal subunit protein bL19 (114 aa).

It belongs to the bacterial ribosomal protein bL19 family.

This protein is located at the 30S-50S ribosomal subunit interface and may play a role in the structure and function of the aminoacyl-tRNA binding site. In Halalkalibacterium halodurans (strain ATCC BAA-125 / DSM 18197 / FERM 7344 / JCM 9153 / C-125) (Bacillus halodurans), this protein is Large ribosomal subunit protein bL19.